The following is a 185-amino-acid chain: Large ribosomal subunit protein uL5 (185 aa).

Belongs to the universal ribosomal protein uL5 family. In terms of assembly, part of the 50S ribosomal subunit; part of the 5S rRNA/L5/L18/L25 subcomplex. Contacts the 5S rRNA and the P site tRNA. Forms a bridge to the 30S subunit in the 70S ribosome.

Functionally, this is one of the proteins that bind and probably mediate the attachment of the 5S RNA into the large ribosomal subunit, where it forms part of the central protuberance. In the 70S ribosome it contacts protein S13 of the 30S subunit (bridge B1b), connecting the 2 subunits; this bridge is implicated in subunit movement. Contacts the P site tRNA; the 5S rRNA and some of its associated proteins might help stabilize positioning of ribosome-bound tRNAs. The protein is Large ribosomal subunit protein uL5 of Xanthobacter autotrophicus (strain ATCC BAA-1158 / Py2).